A 315-amino-acid chain; its full sequence is HVA22-like protein h (315 aa).

The tract at residues 148-315 is disordered; sequence PKPKPKEKKQ…RKARSAGAPR (168 aa). A compositionally biased stretch (polar residues) spans 173–190; sequence ATSQAASSNPQVRLQSKK. The span at 234–248 shows a compositional bias: pro residues; sequence PPGPPPPPPPPPPSP.

This sequence belongs to the DP1 family.

This Arabidopsis thaliana (Mouse-ear cress) protein is HVA22-like protein h (HVA22H).